Here is a 569-residue protein sequence, read N- to C-terminus: Urease subunit alpha (569 aa).

The region spanning 131–569 (GGFDSHIHFI…LPMAQRYFLF (439 aa)) is the Urease domain. Ni(2+)-binding residues include histidine 136, histidine 138, and lysine 219. At lysine 219 the chain carries N6-carboxylysine. Histidine 221 contributes to the substrate binding site. Ni(2+) is bound by residues histidine 248 and histidine 274. Histidine 322 (proton donor) is an active-site residue. Aspartate 362 serves as a coordination point for Ni(2+).

The protein belongs to the metallo-dependent hydrolases superfamily. Urease alpha subunit family. In terms of assembly, heterotrimer of UreA (gamma), UreB (beta) and UreC (alpha) subunits. Three heterotrimers associate to form the active enzyme. The cofactor is Ni cation. Carboxylation allows a single lysine to coordinate two nickel ions.

Its subcellular location is the cytoplasm. It carries out the reaction urea + 2 H2O + H(+) = hydrogencarbonate + 2 NH4(+). It participates in nitrogen metabolism; urea degradation; CO(2) and NH(3) from urea (urease route): step 1/1. The protein is Urease subunit alpha of Roseobacter denitrificans (strain ATCC 33942 / OCh 114) (Erythrobacter sp. (strain OCh 114)).